We begin with the raw amino-acid sequence, 125 residues long: NADPH-dependent 7-cyano-7-deazaguanine reductase (125 aa).

Catalysis depends on Cys40, which acts as the Thioimide intermediate. The Proton donor role is filled by Asp47. Residues 62–64 and 81–82 contribute to the substrate site; these read LET and HE.

Belongs to the GTP cyclohydrolase I family. QueF type 1 subfamily.

Its subcellular location is the cytoplasm. It catalyses the reaction 7-aminomethyl-7-carbaguanine + 2 NADP(+) = 7-cyano-7-deazaguanine + 2 NADPH + 3 H(+). It functions in the pathway tRNA modification; tRNA-queuosine biosynthesis. Catalyzes the NADPH-dependent reduction of 7-cyano-7-deazaguanine (preQ0) to 7-aminomethyl-7-deazaguanine (preQ1). This is NADPH-dependent 7-cyano-7-deazaguanine reductase from Frankia casuarinae (strain DSM 45818 / CECT 9043 / HFP020203 / CcI3).